Consider the following 313-residue polypeptide: Cilia- and flagella-associated protein 36 (313 aa).

2 positions are modified to phosphoserine: S85 and S147. The stretch at 147-187 forms a coiled coil; it reads SDLEQEEMKILKEVLRKSKEEYDQEEERKRKKQLSEAKTEE. Disordered regions lie at residues 165 to 204 and 262 to 292; these read KEEY…SQGD and KIKQ…TAEE. The segment covering 179–189 has biased composition (basic and acidic residues); it reads QLSEAKTEEHP. A compositionally biased stretch (polar residues) spans 192–203; that stretch reads ANETAKMSNSQG. Phosphoserine is present on S201. The span at 271-292 shows a compositional bias: basic and acidic residues; it reads QKGKPAGEVEEMTEKPEMTAEE.

This sequence belongs to the CFAP36 family. As to quaternary structure, interacts with ARL3.

Its subcellular location is the nucleus. It localises to the cytoplasm. The protein localises to the cell projection. It is found in the cilium. The protein resides in the flagellum. In terms of biological role, may act as an effector for ARL3. The polypeptide is Cilia- and flagella-associated protein 36 (Bos taurus (Bovine)).